Here is a 244-residue protein sequence, read N- to C-terminus: Agamous-like MADS-box protein AGL13 (244 aa).

The region spanning 3–57 (RGKVEVKRIENKITRQVTFSKRKSGLLKKAYELSVLCDAEVSLIIFSTGGKLYEF) is the MADS-box domain. Residues 85–175 (TQGLRQEVTK…KLETEDHDFK (91 aa)) enclose the K-box domain.

The protein localises to the nucleus. Probable transcription factor. This Arabidopsis thaliana (Mouse-ear cress) protein is Agamous-like MADS-box protein AGL13 (AGL13).